Consider the following 555-residue polypeptide: Formate--tetrahydrofolate ligase (555 aa).

Position 65–72 (65–72 (TPAGEGKS)) interacts with ATP.

The protein belongs to the formate--tetrahydrofolate ligase family.

The enzyme catalyses (6S)-5,6,7,8-tetrahydrofolate + formate + ATP = (6R)-10-formyltetrahydrofolate + ADP + phosphate. It participates in one-carbon metabolism; tetrahydrofolate interconversion. In Staphylococcus aureus (strain NCTC 8325 / PS 47), this protein is Formate--tetrahydrofolate ligase.